The primary structure comprises 243 residues: Uridylate kinase (243 aa).

18-21 (KLGG) is a binding site for ATP. G59 provides a ligand contact to UMP. 2 residues coordinate ATP: G60 and R64. Residues D79 and 140–147 (MGMPYFST) each bind UMP. Y173 and D176 together coordinate ATP.

Belongs to the UMP kinase family. In terms of assembly, homohexamer.

The protein resides in the cytoplasm. It catalyses the reaction UMP + ATP = UDP + ADP. It participates in pyrimidine metabolism; CTP biosynthesis via de novo pathway; UDP from UMP (UMPK route): step 1/1. Inhibited by UTP. Its function is as follows. Catalyzes the reversible phosphorylation of UMP to UDP. The polypeptide is Uridylate kinase (Corynebacterium efficiens (strain DSM 44549 / YS-314 / AJ 12310 / JCM 11189 / NBRC 100395)).